We begin with the raw amino-acid sequence, 268 residues long: MDTWKVGPVELKSRLILGSGKYKDFGVMREAIAAAKAEVVTVSIRRVELKAPGHVGLLEALEGVRLLPNTAGARTAEEAVRLARLGRLLTGERWVKLEVIPDPTYLLPDPLETLKAAERLIEEDFLVLPYMGPDLVLAKRLAALGTATVMPLAAPIGSGWGVRTRALLELFAREKASLPPVVVDAGLGLPSHAAEVMELGLDAVLVNTAIAEAQDPPAMAEAFRLAVEAGRKAYLAGPMRPREAASPSSPVEGVPFTPTGPRPGRGPQ.

Lys96 serves as the catalytic Schiff-base intermediate with DXP. 1-deoxy-D-xylulose 5-phosphate contacts are provided by residues Gly157, 185 to 186 (AG), and 207 to 208 (NT). A disordered region spans residues 238–268 (PMRPREAASPSSPVEGVPFTPTGPRPGRGPQ). The span at 258–268 (PTGPRPGRGPQ) shows a compositional bias: pro residues.

The protein belongs to the ThiG family. Homotetramer. Forms heterodimers with either ThiH or ThiS.

The protein localises to the cytoplasm. It carries out the reaction [ThiS sulfur-carrier protein]-C-terminal-Gly-aminoethanethioate + 2-iminoacetate + 1-deoxy-D-xylulose 5-phosphate = [ThiS sulfur-carrier protein]-C-terminal Gly-Gly + 2-[(2R,5Z)-2-carboxy-4-methylthiazol-5(2H)-ylidene]ethyl phosphate + 2 H2O + H(+). It functions in the pathway cofactor biosynthesis; thiamine diphosphate biosynthesis. In terms of biological role, catalyzes the rearrangement of 1-deoxy-D-xylulose 5-phosphate (DXP) to produce the thiazole phosphate moiety of thiamine. Sulfur is provided by the thiocarboxylate moiety of the carrier protein ThiS. In vitro, sulfur can be provided by H(2)S. This chain is Thiazole synthase, found in Thermus thermophilus (strain ATCC BAA-163 / DSM 7039 / HB27).